The sequence spans 252 residues: Small ribosomal subunit protein uS2 (252 aa).

Serine 2 is modified (N-acetylserine). The segment covering 213–222 has biased composition (low complexity); sequence QVAEETAGAA. The tract at residues 213 to 252 is disordered; sequence QVAEETAGAATEEEEAKEEVTEEQTEATEWAEETTEAVAW. The span at 223–252 shows a compositional bias: acidic residues; that stretch reads TEEEEAKEEVTEEQTEATEWAEETTEAVAW.

The protein belongs to the universal ribosomal protein uS2 family. Component of the small ribosomal subunit. Mature ribosomes consist of a small (40S) and a large (60S) subunit. The 40S subunit contains about 33 different proteins and 1 molecule of RNA (18S). The 60S subunit contains about 49 different proteins and 3 molecules of RNA (25S, 5.8S and 5S). Interacts with RPS21.

Its subcellular location is the cytoplasm. Its function is as follows. Required for the assembly and/or stability of the 40S ribosomal subunit. Required for the processing of the 20S rRNA-precursor to mature 18S rRNA in a late step of the maturation of 40S ribosomal subunits. This chain is Small ribosomal subunit protein uS2, found in Zygosaccharomyces rouxii (strain ATCC 2623 / CBS 732 / NBRC 1130 / NCYC 568 / NRRL Y-229).